Here is a 92-residue protein sequence, read N- to C-terminus: RNA-binding protein Hfq (92 aa).

Residues 9–68 enclose the Sm domain; the sequence is DPFLNALRRERVPVSVYLVNGIKLQGTIESFDQFVVLLRNTVSQMVYKHAISTVVPARNV. The tract at residues 72–92 is disordered; it reads PGGGYVQSNENNQAEDDDVEQ.

The protein belongs to the Hfq family. Homohexamer.

In terms of biological role, RNA chaperone that binds small regulatory RNA (sRNAs) and mRNAs to facilitate mRNA translational regulation in response to envelope stress, environmental stress and changes in metabolite concentrations. Also binds with high specificity to tRNAs. This is RNA-binding protein Hfq from Xanthomonas campestris pv. campestris (strain 8004).